A 168-amino-acid chain; its full sequence is Ribosome maturation factor RimP (168 aa).

This sequence belongs to the RimP family.

It localises to the cytoplasm. Required for maturation of 30S ribosomal subunits. This is Ribosome maturation factor RimP from Mycoplasma mobile (strain ATCC 43663 / 163K / NCTC 11711) (Mesomycoplasma mobile).